The following is a 726-amino-acid chain: BRCA1-A complex subunit RAP80 (726 aa).

The segment at 1 to 27 (MPRRKKKIKEASEGQNLEKKDLETTSS) is disordered. The tract at residues 1-101 (MPRRKKKIKE…SEQEAKEVNN (101 aa)) is necessary for transcriptional repression. Residues 9–23 (KEASEGQNLEKKDLE) are compositionally biased toward basic and acidic residues. Residue K20 forms a Glycyl lysine isopeptide (Lys-Gly) (interchain with G-Cter in SUMO2) linkage. Phosphoserine is present on S29. A Glycyl lysine isopeptide (Lys-Gly) (interchain with G-Cter in SUMO2) cross-link involves residue K31. S44 and S46 each carry phosphoserine. The interval 47–67 (DGEETKEENGLQKMKTKQSNR) is disordered. At T51 the chain carries Phosphothreonine. The LR motif signature appears at 60 to 78 (MKTKQSNRSKCLAKRKIAQ). Glycyl lysine isopeptide (Lys-Gly) (interchain with G-Cter in SUMO2) cross-links involve residues K75 and K90. 2 UIM domains span residues 80–99 (SEEE…AKEV) and 104–124 (EKEE…RWSS). Disordered regions lie at residues 93–112 (EQEA…LLRK) and 119–208 (NSRW…SRPV). The UIM-linker stretch occupies residues 97–103 (KEVNNQE). Residues 100–200 (NNQEEKEEEL…EEPLSGSSGS (101 aa)) form a necessary for interaction with NR6A1 N-terminus region. S140 carries the phosphoserine modification. The segment covering 177–188 (EEGKEPWDHSEN) has biased composition (basic and acidic residues). Positions 194–205 (LSGSSGSQDQSS) are enriched in low complexity. S205 carries the phosphoserine modification. K245 participates in a covalent cross-link: Glycyl lysine isopeptide (Lys-Gly) (interchain with G-Cter in SUMO2). An AIR region spans residues 270 to 400 (IGGTVHYYWG…EEEPTTGRGQ (131 aa)). The tract at residues 356–411 (GAREERQGSGASVWHSETKDSQKSPITSLKQRLLLEEEPTTGRGQSSQGLFVEETS) is disordered. S379, S402, and S427 each carry phosphoserine. Positions 400–507 (QSSQGLFVEE…DSRPPAVSAS (108 aa)) are necessary for interaction with NR6A1 C-terminus. Residue K436 forms a Glycyl lysine isopeptide (Lys-Gly) (interchain with G-Cter in SUMO2) linkage. Residues 509–536 (RVSCPLCNQDFPPTKIEQHAMYCTGLME) form a UBZ4-type zinc finger. Residues C512, C515, H527, and C531 each coordinate Zn(2+). The segment at 512-589 (CPLCNQDFPP…GEYQCHVETC (78 aa)) is zinc-finger-like region. Residues K551, K569, and K616 each participate in a glycyl lysine isopeptide (Lys-Gly) (interchain with G-Cter in SUMO2) cross-link. Residues 611 to 675 (APVEGKPKQR…DVEEAGCSRE (65 aa)) are disordered. S636 is modified (phosphoserine). Residues 640-653 (QSEHRTTGVERTPK) show a composition bias toward basic and acidic residues. Phosphoserine occurs at positions 664 and 688. A Glycyl lysine isopeptide (Lys-Gly) (interchain with G-Cter in SUMO2) cross-link involves residue K707.

This sequence belongs to the RAP80 family. In terms of assembly, component of the ARISC complex, at least composed of UIMC1/RAP80, ABRAXAS1, BRCC3/BRCC36, BABAM2 and BABAM1/NBA1. Component of the BRCA1-A complex, at least composed of the BRCA1, BARD1, UIMC1/RAP80, ABRAXAS1, BRCC3/BRCC36, BABAM2 and BABAM1/NBA1. In the BRCA1-A complex, interacts directly with ABRAXAS1. Interacts with UBE2I. Interacts with NR6A1. Interacts with ESR1. Interacts with TSP57. Interacts with TRAIP. In terms of processing, sumoylated. Post-translationally, phosphorylated upon DNA damage by ATM or ATR.

The protein resides in the nucleus. Functionally, ubiquitin-binding protein. Specifically recognizes and binds 'Lys-63'-linked ubiquitin. Plays a central role in the BRCA1-A complex by specifically binding 'Lys-63'-linked ubiquitinated histones H2A and H2AX at DNA lesions sites, leading to target the BRCA1-BARD1 heterodimer to sites of DNA damage at double-strand breaks (DSBs). The BRCA1-A complex also possesses deubiquitinase activity that specifically removes 'Lys-63'-linked ubiquitin on histones H2A and H2AX. Also weakly binds monoubiquitin but with much less affinity than 'Lys-63'-linked ubiquitin. May interact with monoubiquitinated histones H2A and H2B; the relevance of such results is however unclear in vivo. Does not bind Lys-48'-linked ubiquitin. May indirectly act as a transcriptional repressor by inhibiting the interaction of NR6A1 with the corepressor NCOR1. In Rattus norvegicus (Rat), this protein is BRCA1-A complex subunit RAP80 (Uimc1).